Consider the following 307-residue polypeptide: Putative transcription factor bHLH086 (307 aa).

2 disordered regions span residues M1–N49 and H167–A215. 2 stretches are compositionally biased toward polar residues: residues N12 to N28 and G183 to N197. A basic motif region spans residues S207 to R220. The bHLH domain maps to S207 to L256. Residues E221 to L256 form a helix-loop-helix motif region.

As to quaternary structure, homodimer. Forms heterodimers with RHD6. Interacts with TIFY10B/JAZ2, TIFY6A/JAZ4, TIFY5A/JAZ8, TIFY7/JAZ9 and TIFY9/JAZ10.

Its subcellular location is the nucleus. Functionally, transcription factor that is specifically required for the development of root hairs. Acts with RHD6 to positively regulate root hair development. Acts downstream of genes that regulate epidermal pattern formation, such as GL2. Acts with RHD6 as transcription factor that integrates a jasmonate (JA) signaling pathway that stimulates root hair growth. The chain is Putative transcription factor bHLH086 from Arabidopsis thaliana (Mouse-ear cress).